A 209-amino-acid chain; its full sequence is Uracil phosphoribosyltransferase (209 aa).

5-phospho-alpha-D-ribose 1-diphosphate contacts are provided by residues Arg79, Arg104, and 131 to 139 (DPMLATGAS). Residues Ile194 and 199 to 201 (GDA) each bind uracil. Residue Asp200 participates in 5-phospho-alpha-D-ribose 1-diphosphate binding.

The protein belongs to the UPRTase family. The cofactor is Mg(2+).

The enzyme catalyses UMP + diphosphate = 5-phospho-alpha-D-ribose 1-diphosphate + uracil. Its pathway is pyrimidine metabolism; UMP biosynthesis via salvage pathway; UMP from uracil: step 1/1. With respect to regulation, allosterically activated by GTP. Functionally, catalyzes the conversion of uracil and 5-phospho-alpha-D-ribose 1-diphosphate (PRPP) to UMP and diphosphate. The polypeptide is Uracil phosphoribosyltransferase (Staphylococcus aureus (strain JH1)).